The following is a 453-amino-acid chain: Chromosomal replication initiator protein DnaA (453 aa).

A domain I, interacts with DnaA modulators region spans residues 1–74 (MKEKQFWNRI…GFEIYDAEIT (74 aa)). The segment at 74-113 (TPHYIFTKPQDTTSSQVEEATNLTLYDYSPKLVSIPYSDT) is domain II. The segment at 114 to 331 (GLKEKYTFDN…GAINDITLIA (218 aa)) is domain III, AAA+ region. Residues Gly-158, Gly-160, Lys-161, and Thr-162 each contribute to the ATP site. Residues 332-453 (RVKKIKDITI…EIESIKKKIK (122 aa)) are domain IV, binds dsDNA.

The protein belongs to the DnaA family. Oligomerizes as a right-handed, spiral filament on DNA at oriC. Interacts (via domains I and III) with CcrZ.

The protein resides in the cytoplasm. Its activity is regulated as follows. CcrZ stimulates DnaA, possibly by phosphorylation of an intermediate molecule, to initiate DNA replication. Plays an essential role in the initiation and regulation of chromosomal replication. ATP-DnaA binds to the origin of replication (oriC) to initiate formation of the DNA replication initiation complex once per cell cycle. Binds the DnaA box (a 9 base pair repeat at the origin) and separates the double-stranded (ds)DNA. Forms a right-handed helical filament on oriC DNA; dsDNA binds to the exterior of the filament while single-stranded (ss)DNA is stabiized in the filament's interior. The ATP-DnaA-oriC complex binds and stabilizes one strand of the AT-rich DNA unwinding element (DUE), permitting loading of DNA polymerase. After initiation quickly degrades to an ADP-DnaA complex that is not apt for DNA replication. Binds acidic phospholipids. Functionally, mutations in this gene suppress a deletion of cell cycle regulator ccrZ. This chain is Chromosomal replication initiator protein DnaA, found in Streptococcus pneumoniae serotype 2 (strain D39 / NCTC 7466).